The chain runs to 443 residues: Ribitol-5-phosphate xylosyltransferase 1 (443 aa).

Residues 1 to 9 (MRLTRKRLC) lie on the Cytoplasmic side of the membrane. The chain crosses the membrane as a helical; Signal-anchor for type II membrane protein span at residues 10-30 (SFLIALYCLFSLYAAYHVFFG). Residues 31–443 (RRRQAPAGSP…ESSFLMNNKS (413 aa)) lie on the Extracellular side of the membrane. Residues 35-76 (APAGSPRGLRKGAAPARERRGREQSTLESEEWNPWEGDEKNE) are disordered. Basic and acidic residues predominate over residues 50–59 (ARERRGREQS).

It belongs to the RXYLT1 family. In terms of assembly, forms a complex composed of FKTN/fukutin, FKRP and RXYLT1/TMEM5.

It is found in the golgi apparatus membrane. It carries out the reaction 3-O-[Rib-ol-P-Rib-ol-P-3-beta-D-GalNAc-(1-&gt;3)-beta-D-GlcNAc-(1-&gt;4)-(O-6-P-alpha-D-Man)]-Thr-[protein] + UDP-alpha-D-xylose = 3-O-[beta-D-Xyl-(1-&gt;4)-Rib-ol-P-Rib-ol-P-3-beta-D-GalNAc-(1-&gt;3)-beta-D-GlcNAc-(1-&gt;4)-(O-6-P-alpha-D-Man)]-Thr-[protein] + UDP + H(+). It functions in the pathway protein modification; protein glycosylation. Its function is as follows. Acts as a UDP-D-xylose:ribitol-5-phosphate beta1,4-xylosyltransferase, which catalyzes the transfer of UDP-D-xylose to ribitol 5-phosphate (Rbo5P) to form the Xylbeta1-4Rbo5P linkage on O-mannosyl glycan. Participates in the biosynthesis of the phosphorylated O-mannosyl trisaccharide (N-acetylgalactosamine-beta-3-N-acetylglucosamine-beta-4-(phosphate-6-)mannose), a carbohydrate structure present in alpha-dystroglycan (DAG1), which is required for binding laminin G-like domain-containing extracellular proteins with high affinity. This chain is Ribitol-5-phosphate xylosyltransferase 1, found in Homo sapiens (Human).